A 138-amino-acid polypeptide reads, in one-letter code: Single-stranded DNA-binding protein 4 (138 aa).

The region spanning 1–104 (MINNVVLIGR…VVADSFQILE (104 aa)) is the SSB domain. Residues 107–138 (DNSTNQASMDDQLPPSFGNSQPMDISDDDLPF) form a disordered region. The Important for interaction with partner proteins signature appears at 133–138 (DDDLPF).

As to quaternary structure, homotetramer.

Functionally, plays an important role in DNA replication, recombination and repair. Binds to ssDNA and to an array of partner proteins to recruit them to their sites of action during DNA metabolism. The polypeptide is Single-stranded DNA-binding protein 4 (ssb4) (Streptococcus agalactiae serotype V (strain ATCC BAA-611 / 2603 V/R)).